Consider the following 261-residue polypeptide: Lysosome-associated membrane glycoprotein 5 (261 aa).

The signal sequence occupies residues 1-29; that stretch reads MDLQGRAVPSVDRLRVLLMLFHTMAQIMA. Topologically, residues 30–234 are extracellular; it reads EQEVENLSGL…AVDEREQLEE (205 aa). Residues Asn35, Asn53, and Asn126 are each glycosylated (N-linked (GlcNAc...) asparagine). The helical transmembrane segment at 235-255 threads the bilayer; sequence TLPLILGLILGLVIVVTLAIY. The Cytoplasmic portion of the chain corresponds to 256 to 261; sequence HVHPQK.

It belongs to the LAMP family. In terms of processing, glycosylated.

It is found in the cytoplasmic vesicle membrane. It localises to the cell membrane. The protein localises to the cell projection. Its subcellular location is the dendrite. The protein resides in the cytoplasmic vesicle. It is found in the secretory vesicle. It localises to the synaptic vesicle membrane. The protein localises to the growth cone membrane. Its subcellular location is the early endosome membrane. The protein resides in the recycling endosome. It is found in the endoplasmic reticulum-Golgi intermediate compartment membrane. It localises to the endosome membrane. Functionally, plays a role in short-term synaptic plasticity in a subset of GABAergic neurons in the brain. The sequence is that of Lysosome-associated membrane glycoprotein 5 (LAMP5) from Pongo abelii (Sumatran orangutan).